Reading from the N-terminus, the 356-residue chain is tRNA N6-adenosine threonylcarbamoyltransferase (356 aa).

His-115 and His-119 together coordinate Fe cation. Substrate-binding positions include 139–143 (LVSGG), Asp-173, Gly-186, Asp-190, and Asn-291. Asp-319 is a Fe cation binding site.

The protein belongs to the KAE1 / TsaD family. Requires Fe(2+) as cofactor.

The protein localises to the cytoplasm. The enzyme catalyses L-threonylcarbamoyladenylate + adenosine(37) in tRNA = N(6)-L-threonylcarbamoyladenosine(37) in tRNA + AMP + H(+). Functionally, required for the formation of a threonylcarbamoyl group on adenosine at position 37 (t(6)A37) in tRNAs that read codons beginning with adenine. Is involved in the transfer of the threonylcarbamoyl moiety of threonylcarbamoyl-AMP (TC-AMP) to the N6 group of A37, together with TsaE and TsaB. TsaD likely plays a direct catalytic role in this reaction. The protein is tRNA N6-adenosine threonylcarbamoyltransferase of Arthrobacter sp. (strain FB24).